Reading from the N-terminus, the 595-residue chain is Epsin-2 (595 aa).

The a 1,2-diacyl-sn-glycero-3-phospho-(1D-myo-inositol-4,5-bisphosphate) site is built by R8, K11, R25, N30, R63, and H73. Residues 12–144 form the ENTH domain; sequence NIVNNYSEAE…KDEERLKVER (133 aa). Over residues 164-183 the composition is skewed to polar residues; it reads NQITFGRGSSQPNLSTSYSE. Disordered regions lie at residues 164–254, 267–289, 305–396, and 423–469; these read NQIT…RLRR, SRRDTVKVPKKKEAKACCKPGSH, SGPV…KPSS, and TSKK…PESF. R170 carries the post-translational modification Omega-N-methylarginine. S173, S192, and S195 each carry phosphoserine. Polar residues-rich tracts occupy residues 197-216 and 235-245; these read HGSTSPRVSSELEQARPQTS and EQSSESVQTAR. UIM domains follow at residues 218-237 and 255-274; these read EEELQLQLALAMSREVAEQS and GDDLRLQMALEESRRDTVKV. Polar residues predominate over residues 306–337; the sequence is GPVTQKTEPWSAGASANQTNPWGGTVAPSNIT. A run of 4 repeats spans residues 313–315, 325–327, 338–340, and 352–354. The segment at 313 to 389 is 6 X 3 AA repeats of [DE]-P-W; sequence EPWSAGASAN…SNAGKTTDAW (77 aa). The segment covering 358–367 has biased composition (polar residues); the sequence is TTASTQSVPK. Residues 370–372 form repeat 5; that stretch reads DPW. A compositionally biased stretch (polar residues) spans 374–384; sequence ASQQPASNAGK. Copy 6 of the repeat occupies 387–389; sequence DAW. A Phosphoserine modification is found at S443. Over residues 449–460 the composition is skewed to low complexity; that stretch reads SQSLTSASSKPS. Residue T465 is modified to Phosphothreonine. Repeat copies occupy residues 494-496 and 508-510. The interval 494 to 593 is 3 X 3 AA repeats of N-P-F; sequence NPFLAPGAAA…AQSTGTTNPF (100 aa). S526 is modified (phosphoserine). Residues 591 to 593 form repeat 3; sequence NPF.

It belongs to the epsin family. In terms of assembly, binds EPS15, AP-2 and clathrin. Interacts with UBQLN2. Interacts with ITSN1. Post-translationally, ubiquitinated.

It localises to the cytoplasm. In terms of biological role, plays a role in the formation of clathrin-coated invaginations and endocytosis. The protein is Epsin-2 (Epn2) of Mus musculus (Mouse).